The following is a 562-amino-acid chain: MFS-type efflux pump elcC (562 aa).

Transmembrane regions (helical) follow at residues 50–70, 80–100, 111–131, 139–159, 184–204, 215–235, 257–277, 288–308, 309–329, 351–371, and 383–403; these read WVFLIALALFEIGSLICGAAP, VVAGIGSGGLFAGAILLVAEF, GMLGAMYSVASVAGPLMGGAF, LCFYINLPLGVVTAVIVFLLV, LYGLVVLVPTIICILLATQWG, IIALFVVGFVLFVAFVVIEIW, IFSFCLFGSFLVVAYFLPLWF, SGIHNLPSILGTTIFSVAAGG, MVFGLGYYTWACILGSVLAAV, VLYGAGCGFGLNQPLIAIQAA, and VVIFMQTFGGTIAIAVAQNVF. N-linked (GlcNAc...) asparagine glycosylation is present at N448. The chain crosses the membrane as a helical span at residues 455-475; sequence FYVAVATAGLSMAGSILIPWL. Residues 515-562 form a disordered region; the sequence is EIASEDSQSSDIEKVPRNNEVSTYDSQTSEVEKSSVGSTNRKVESIRN. The span at 533–554 shows a compositional bias: polar residues; sequence NEVSTYDSQTSEVEKSSVGSTN.

This sequence belongs to the major facilitator superfamily. TCR/Tet family.

The protein localises to the cell membrane. Its function is as follows. MFS-type efflux pump; part of the gene cluster that mediates the biosynthesis of elsinochrome C, a perelyenequinone phytotoxin structurally similar to cercosporin. The chain is MFS-type efflux pump elcC from Phaeosphaeria nodorum (strain SN15 / ATCC MYA-4574 / FGSC 10173) (Glume blotch fungus).